The following is a 449-amino-acid chain: MGRLFGTDGVRGVANLELTPKLAYQLGQAGAYVLTGETKHTPKILVGMDTRISGDMLEAALISGICSVGAQVVSLGVIPTPAIAYLTRQYDADAGVVISASHNPFEYNGIKFFNSNGYKLPDAIEDKIEEIIQNGGEDLPKPVGQNIGFKCYQENALEDYVNFVKGTITGDFEGIKVAIDCANGASFQAAPMALFDLKADVSVINNEPDGTNINSGCGSTHMRQLQAYVKEIKADIGFAFDGDADRVLAVDENGNIVDGDQIMAIIGLYLKDKGILSQNTIVATVMSNMGLDIMAKNKGLTIEKTKVGDRYVLEEMLNKGYMLGGEQSGHIIFLDHNTTGDGLLTAVQLLKVLKDSGKKLSELAGVMEILPQVLINAKVTNEKKYKYLDDEVIKKMCKELEDEFKGEGRVLIRPSGTEPLVRVMIEGKDKDIITRRAKELVRVIEGRLS.

Serine 101 acts as the Phosphoserine intermediate in catalysis. The Mg(2+) site is built by serine 101, aspartate 241, aspartate 243, and aspartate 245. Residue serine 101 is modified to Phosphoserine.

Belongs to the phosphohexose mutase family. It depends on Mg(2+) as a cofactor. Post-translationally, activated by phosphorylation.

It carries out the reaction alpha-D-glucosamine 1-phosphate = D-glucosamine 6-phosphate. Catalyzes the conversion of glucosamine-6-phosphate to glucosamine-1-phosphate. The chain is Phosphoglucosamine mutase from Ruminiclostridium cellulolyticum (strain ATCC 35319 / DSM 5812 / JCM 6584 / H10) (Clostridium cellulolyticum).